We begin with the raw amino-acid sequence, 403 residues long: Semaphorin-like protein A39 (403 aa).

The N-terminal stretch at 1–14 is a signal peptide; the sequence is MIPLLFILFYFANG. Positions 15–403 constitute a Sema domain; sequence IEWHKFETSE…MPQMKKILKM (389 aa).

The protein belongs to the semaphorin family. In terms of assembly, interacts with host VESPR.

The protein localises to the secreted. Acts as a semaphorin-like protein and binds to host plexin C1 receptor. May alter the movement of host plexin C1-expressing cells including dendritic cells, monocytes, or granulocytes in the proximity of infected cells. May also regulate host cell cytoskeleton of neighboring cells to improve viral infection. The polypeptide is Semaphorin-like protein A39 (Homo sapiens (Human)).